We begin with the raw amino-acid sequence, 155 residues long: Ribonuclease H (155 aa).

The RNase H type-1 domain occupies 9–150; the sequence is DGQQVEMWTD…ADALANQGVE (142 aa). Mg(2+)-binding residues include aspartate 18, glutamate 56, aspartate 78, and aspartate 142.

It belongs to the RNase H family. Monomer. Mg(2+) serves as cofactor.

It localises to the cytoplasm. The enzyme catalyses Endonucleolytic cleavage to 5'-phosphomonoester.. Functionally, endonuclease that specifically degrades the RNA of RNA-DNA hybrids. The protein is Ribonuclease H of Bordetella bronchiseptica (strain ATCC BAA-588 / NCTC 13252 / RB50) (Alcaligenes bronchisepticus).